The following is a 432-amino-acid chain: Glutamyl-tRNA reductase (432 aa).

Substrate is bound by residues 55-58, serine 114, 119-121, and glutamine 125; these read TCNR and ETQ. The Nucleophile role is filled by cysteine 56. 194–199 provides a ligand contact to NADP(+); that stretch reads GAGEMI.

It belongs to the glutamyl-tRNA reductase family. Homodimer.

The catalysed reaction is (S)-4-amino-5-oxopentanoate + tRNA(Glu) + NADP(+) = L-glutamyl-tRNA(Glu) + NADPH + H(+). It functions in the pathway porphyrin-containing compound metabolism; protoporphyrin-IX biosynthesis; 5-aminolevulinate from L-glutamyl-tRNA(Glu): step 1/2. Functionally, catalyzes the NADPH-dependent reduction of glutamyl-tRNA(Glu) to glutamate 1-semialdehyde (GSA). The polypeptide is Glutamyl-tRNA reductase (Burkholderia pseudomallei (strain 1710b)).